The following is a 155-amino-acid chain: 3-hydroxyacyl-[acyl-carrier-protein] dehydratase FabZ (155 aa).

His59 is a catalytic residue.

Belongs to the thioester dehydratase family. FabZ subfamily.

The protein resides in the cytoplasm. The catalysed reaction is a (3R)-hydroxyacyl-[ACP] = a (2E)-enoyl-[ACP] + H2O. Functionally, involved in unsaturated fatty acids biosynthesis. Catalyzes the dehydration of short chain beta-hydroxyacyl-ACPs and long chain saturated and unsaturated beta-hydroxyacyl-ACPs. This chain is 3-hydroxyacyl-[acyl-carrier-protein] dehydratase FabZ, found in Bartonella henselae (strain ATCC 49882 / DSM 28221 / CCUG 30454 / Houston 1) (Rochalimaea henselae).